The sequence spans 195 residues: 4'-phosphopantetheinyl transferase AcpT (195 aa).

It belongs to the P-Pant transferase superfamily. Gsp/Sfp/HetI/AcpT family.

The catalysed reaction is apo-[ACP] + CoA = holo-[ACP] + adenosine 3',5'-bisphosphate + H(+). Its function is as follows. May be involved in an alternative pathway for phosphopantetheinyl transfer and holo-ACP synthesis in E.coli. The native apo-protein substrate is unknown. Is able to functionally replace AcpS in vivo but only when expressed at high levels. The sequence is that of 4'-phosphopantetheinyl transferase AcpT from Escherichia coli (strain K12).